A 150-amino-acid polypeptide reads, in one-letter code: Large ribosomal subunit protein bL9 (150 aa).

It belongs to the bacterial ribosomal protein bL9 family.

In terms of biological role, binds to the 23S rRNA. This is Large ribosomal subunit protein bL9 from Paraburkholderia phytofirmans (strain DSM 17436 / LMG 22146 / PsJN) (Burkholderia phytofirmans).